The sequence spans 498 residues: ATP synthase subunit beta, chloroplastic (498 aa).

172-179 serves as a coordination point for ATP; that stretch reads GGAGVGKT.

Belongs to the ATPase alpha/beta chains family. F-type ATPases have 2 components, CF(1) - the catalytic core - and CF(0) - the membrane proton channel. CF(1) has five subunits: alpha(3), beta(3), gamma(1), delta(1), epsilon(1). CF(0) has four main subunits: a(1), b(1), b'(1) and c(9-12).

It is found in the plastid. It localises to the chloroplast thylakoid membrane. The enzyme catalyses ATP + H2O + 4 H(+)(in) = ADP + phosphate + 5 H(+)(out). In terms of biological role, produces ATP from ADP in the presence of a proton gradient across the membrane. The catalytic sites are hosted primarily by the beta subunits. This Phalaenopsis aphrodite subsp. formosana (Moth orchid) protein is ATP synthase subunit beta, chloroplastic.